A 248-amino-acid polypeptide reads, in one-letter code: Small ribosomal subunit protein uS3 (248 aa).

Positions 39-107 constitute a KH type-2 domain; that stretch reads IRQMLLKQLK…EVFINIVEIR (69 aa). The interval 214-248 is disordered; the sequence is AVDKRMTAESEGPSSGRPPRRDRDRDRDRDRDSAA. Over residues 232 to 248 the composition is skewed to basic and acidic residues; that stretch reads PRRDRDRDRDRDRDSAA.

Belongs to the universal ribosomal protein uS3 family. In terms of assembly, part of the 30S ribosomal subunit. Forms a tight complex with proteins S10 and S14.

Its function is as follows. Binds the lower part of the 30S subunit head. Binds mRNA in the 70S ribosome, positioning it for translation. This chain is Small ribosomal subunit protein uS3, found in Azorhizobium caulinodans (strain ATCC 43989 / DSM 5975 / JCM 20966 / LMG 6465 / NBRC 14845 / NCIMB 13405 / ORS 571).